We begin with the raw amino-acid sequence, 341 residues long: L-threonine 3-dehydrogenase (341 aa).

Cys38 lines the Zn(2+) pocket. Active-site charge relay system residues include Thr40 and His43. His63, Glu64, Cys93, Cys96, Cys99, and Cys107 together coordinate Zn(2+). Residues Ile175, Asp195, Arg200, 262 to 264 (LGI), and 286 to 287 (IY) each bind NAD(+).

It belongs to the zinc-containing alcohol dehydrogenase family. As to quaternary structure, homotetramer. Requires Zn(2+) as cofactor.

It localises to the cytoplasm. It carries out the reaction L-threonine + NAD(+) = (2S)-2-amino-3-oxobutanoate + NADH + H(+). Its pathway is amino-acid degradation; L-threonine degradation via oxydo-reductase pathway; glycine from L-threonine: step 1/2. Functionally, catalyzes the NAD(+)-dependent oxidation of L-threonine to 2-amino-3-ketobutyrate. In Yersinia pestis bv. Antiqua (strain Antiqua), this protein is L-threonine 3-dehydrogenase.